The chain runs to 508 residues: MGLPWYRVHTVVLNDPGRLLSVHIMHTALVAGWAGSMALYELAVFDPSDPVLDPMWRQGMFVIPFMTRLGITNSWGGWSITGGTITNPGIWSYEGVAGAHIVFSGLCFLAAIWHWVYWDLEIFCDERTGKPSLDLPKIFGIHLFLSGVACFGFGAFHVTGLYGPGIWVSDPYGLTGKVQPVNPAWGVEGFDPFVPGGIASHHIAAGTLGILAGLFHLSVRPPQRLYKGLRMGNIETVLSSSIAAVFFAAFVVAGTMWYGSATTPIELFGPTRYQWDQGYFQQEIYRRVSAGLAENQSLSEAWSKIPEKLAFYDYIGNNPAKGGLFRAGSMDNGDGIAVGWLGHPIFRDKDGRELFVRRMPTFFETFPVVLVDGDGIVRADVPFRRAESKYSVEQVGVTVEFYGGELNGVSYSDPATVKKYARRAQLGEIFELDRATLKSDGVFRSSPRGWFTFGHASFALLFFFGHIWHGARTLFRDVFAGIDPDLDAQVEFGAFQKLGDPTTRRQVV.

A run of 6 helical transmembrane segments spans residues 21–36, 101–115, 140–156, 203–218, 237–252, and 457–472; these read SVHI…WAGS, IVFS…IWHW, GIHL…FGAF, IAAG…FHLS, VLSS…AFVV, and SFAL…HGAR.

Belongs to the PsbB/PsbC family. PsbB subfamily. In terms of assembly, PSII is composed of 1 copy each of membrane proteins PsbA, PsbB, PsbC, PsbD, PsbE, PsbF, PsbH, PsbI, PsbJ, PsbK, PsbL, PsbM, PsbT, PsbX, PsbY, PsbZ, Psb30/Ycf12, at least 3 peripheral proteins of the oxygen-evolving complex and a large number of cofactors. It forms dimeric complexes. Requires Binds multiple chlorophylls. PSII binds additional chlorophylls, carotenoids and specific lipids. as cofactor.

The protein localises to the plastid. Its subcellular location is the chloroplast thylakoid membrane. Functionally, one of the components of the core complex of photosystem II (PSII). It binds chlorophyll and helps catalyze the primary light-induced photochemical processes of PSII. PSII is a light-driven water:plastoquinone oxidoreductase, using light energy to abstract electrons from H(2)O, generating O(2) and a proton gradient subsequently used for ATP formation. This chain is Photosystem II CP47 reaction center protein, found in Gossypium hirsutum (Upland cotton).